Consider the following 66-residue polypeptide: Large ribosomal subunit protein bL33 (66 aa).

It belongs to the bacterial ribosomal protein bL33 family.

The sequence is that of Large ribosomal subunit protein bL33 from Prochlorococcus marinus (strain MIT 9303).